Here is a 213-residue protein sequence, read N- to C-terminus: N-(5'-phosphoribosyl)anthranilate isomerase (213 aa).

It belongs to the TrpF family.

It catalyses the reaction N-(5-phospho-beta-D-ribosyl)anthranilate = 1-(2-carboxyphenylamino)-1-deoxy-D-ribulose 5-phosphate. The protein operates within amino-acid biosynthesis; L-tryptophan biosynthesis; L-tryptophan from chorismate: step 3/5. In Roseiflexus sp. (strain RS-1), this protein is N-(5'-phosphoribosyl)anthranilate isomerase.